Reading from the N-terminus, the 485-residue chain is ATP synthase subunit beta (485 aa).

The span at M1–T11 shows a compositional bias: basic and acidic residues. The segment at M1 to G20 is disordered. G170–T177 is an ATP binding site.

It belongs to the ATPase alpha/beta chains family. As to quaternary structure, F-type ATPases have 2 components, CF(1) - the catalytic core - and CF(0) - the membrane proton channel. CF(1) has five subunits: alpha(3), beta(3), gamma(1), delta(1), epsilon(1). CF(0) has three main subunits: a(1), b(2) and c(9-12). The alpha and beta chains form an alternating ring which encloses part of the gamma chain. CF(1) is attached to CF(0) by a central stalk formed by the gamma and epsilon chains, while a peripheral stalk is formed by the delta and b chains.

The protein localises to the cell membrane. It catalyses the reaction ATP + H2O + 4 H(+)(in) = ADP + phosphate + 5 H(+)(out). Its function is as follows. Produces ATP from ADP in the presence of a proton gradient across the membrane. The catalytic sites are hosted primarily by the beta subunits. This chain is ATP synthase subunit beta, found in Mycobacterium avium (strain 104).